We begin with the raw amino-acid sequence, 250 residues long: Pyrroloquinoline-quinone synthase (250 aa).

Belongs to the PqqC family.

The catalysed reaction is 6-(2-amino-2-carboxyethyl)-7,8-dioxo-1,2,3,4,7,8-hexahydroquinoline-2,4-dicarboxylate + 3 O2 = pyrroloquinoline quinone + 2 H2O2 + 2 H2O + H(+). It participates in cofactor biosynthesis; pyrroloquinoline quinone biosynthesis. Ring cyclization and eight-electron oxidation of 3a-(2-amino-2-carboxyethyl)-4,5-dioxo-4,5,6,7,8,9-hexahydroquinoline-7,9-dicarboxylic-acid to PQQ. The polypeptide is Pyrroloquinoline-quinone synthase (Xanthomonas axonopodis pv. citri (strain 306)).